The sequence spans 72 residues: Translation initiation factor IF-1 (72 aa).

In terms of domain architecture, S1-like spans 1-72; that stretch reads MAKEEVLEFP…TKGRITYRFK (72 aa).

This sequence belongs to the IF-1 family. In terms of assembly, component of the 30S ribosomal translation pre-initiation complex which assembles on the 30S ribosome in the order IF-2 and IF-3, IF-1 and N-formylmethionyl-tRNA(fMet); mRNA recruitment can occur at any time during PIC assembly.

Its subcellular location is the cytoplasm. Functionally, one of the essential components for the initiation of protein synthesis. Stabilizes the binding of IF-2 and IF-3 on the 30S subunit to which N-formylmethionyl-tRNA(fMet) subsequently binds. Helps modulate mRNA selection, yielding the 30S pre-initiation complex (PIC). Upon addition of the 50S ribosomal subunit IF-1, IF-2 and IF-3 are released leaving the mature 70S translation initiation complex. This chain is Translation initiation factor IF-1, found in Brucella abortus (strain 2308).